A 202-amino-acid chain; its full sequence is Orotate phosphoribosyltransferase (202 aa).

113-121 contacts 5-phospho-alpha-D-ribose 1-diphosphate; it reads EDIITTGGS. Orotate-binding residues include threonine 117 and arginine 145.

This sequence belongs to the purine/pyrimidine phosphoribosyltransferase family. PyrE subfamily. Homodimer. Requires Mg(2+) as cofactor.

It catalyses the reaction orotidine 5'-phosphate + diphosphate = orotate + 5-phospho-alpha-D-ribose 1-diphosphate. It functions in the pathway pyrimidine metabolism; UMP biosynthesis via de novo pathway; UMP from orotate: step 1/2. In terms of biological role, catalyzes the transfer of a ribosyl phosphate group from 5-phosphoribose 1-diphosphate to orotate, leading to the formation of orotidine monophosphate (OMP). This is Orotate phosphoribosyltransferase from Nitratiruptor sp. (strain SB155-2).